We begin with the raw amino-acid sequence, 226 residues long: NADH-ubiquinone oxidoreductase chain 6 (226 aa).

6 helical membrane-spanning segments follow: residues 1–21 (MNNFLLDFLALGAVLSGILVI), 27–47 (VISVLFLISVFVNVAGYLVLL), 52–72 (IGISYLIVYIGAVTVLFLFVI), 94–114 (PLATIIGSLLLFELVSVVPSF), 126–146 (IFKFLGVGILNWFNSLSLGVG), and 185–205 (ALWLIVSSLILLLAMVGPITL).

Belongs to the complex I subunit 6 family.

It localises to the mitochondrion inner membrane. The enzyme catalyses a ubiquinone + NADH + 5 H(+)(in) = a ubiquinol + NAD(+) + 4 H(+)(out). In terms of biological role, core subunit of the mitochondrial membrane respiratory chain NADH dehydrogenase (Complex I) that is believed to belong to the minimal assembly required for catalysis. Complex I functions in the transfer of electrons from NADH to the respiratory chain. The immediate electron acceptor for the enzyme is believed to be ubiquinone. The polypeptide is NADH-ubiquinone oxidoreductase chain 6 (ND6) (Mycosarcoma maydis (Corn smut fungus)).